The sequence spans 246 residues: MQFLVDTHTHTISSGHAYSTVLENAAAASQRGLEMFCVTDHAPTMPGAPHFWHFANQRVIPRLLHGVAVLRGVEANILNIEGEIDLDERIINQLDWVMASFHEPVFRYTNKSDHTQALLNVIRSGRVDAIGHPGNPNYDFDFESVFKEAAKHNVVMEINNSSLSGSRVGSEIRCEDIAMYIKEIGGRITTGSDAHFAADVGNFESVEPLLKKVNFPIESIITRHSRSFLDFLEERGKKAISELAHL.

9 residues coordinate Zn(2+): H8, H10, H16, H41, E74, H102, H132, D193, and H195.

Belongs to the PHP family. Zn(2+) serves as cofactor.

This is Probable phosphatase PBPRB2022 from Photobacterium profundum (strain SS9).